The primary structure comprises 455 residues: Ribulose bisphosphate carboxylase large chain (455 aa).

An N6,N6,N6-trimethyllysine modification is found at K5. The substrate site is built by N114 and T164. K166 acts as the Proton acceptor in catalysis. Substrate is bound at residue K168. The Mg(2+) site is built by K192, D194, and E195. At K192 the chain carries N6-carboxylysine. Catalysis depends on H285, which acts as the Proton acceptor. Positions 286, 318, and 370 each coordinate substrate.

It belongs to the RuBisCO large chain family. Type I subfamily. Heterohexadecamer of 8 large chains and 8 small chains; disulfide-linked. The disulfide link is formed within the large subunit homodimers. Mg(2+) serves as cofactor. The disulfide bond which can form in the large chain dimeric partners within the hexadecamer appears to be associated with oxidative stress and protein turnover.

It is found in the plastid. The protein resides in the chloroplast. It catalyses the reaction 2 (2R)-3-phosphoglycerate + 2 H(+) = D-ribulose 1,5-bisphosphate + CO2 + H2O. It carries out the reaction D-ribulose 1,5-bisphosphate + O2 = 2-phosphoglycolate + (2R)-3-phosphoglycerate + 2 H(+). Its function is as follows. RuBisCO catalyzes two reactions: the carboxylation of D-ribulose 1,5-bisphosphate, the primary event in carbon dioxide fixation, as well as the oxidative fragmentation of the pentose substrate in the photorespiration process. Both reactions occur simultaneously and in competition at the same active site. The chain is Ribulose bisphosphate carboxylase large chain from Lupinus digitatus (Lupine).